The sequence spans 493 residues: Dynein regulatory complex subunit 2 (493 aa).

Coiled coils occupy residues 99-163 (DSVI…RKLI) and 253-280 (KDEK…ILKG).

It belongs to the DRC2 family. In terms of assembly, component of the nexin-dynein regulatory complex (N-DRC). Interacts with DRC1.

Its subcellular location is the cytoplasm. It is found in the cytoskeleton. It localises to the flagellum basal body. The protein resides in the cell projection. The protein localises to the cilium. Its subcellular location is the flagellum. It is found in the flagellum axoneme. Functionally, component of the nexin-dynein regulatory complex (N-DRC), a key regulator of ciliary/flagellar motility which maintains the alignment and integrity of the distal axoneme and regulates microtubule sliding in motile axonemes. Plays a critical role in the assembly of N-DRC and also stabilizes the assembly of multiple inner dynein arms and radial spokes. Coassembles with DRC1 to form a central scaffold needed for assembly of the N-DRC and its attachment to the outer doublet microtubules. This chain is Dynein regulatory complex subunit 2 (Ccdc65), found in Mus musculus (Mouse).